A 373-amino-acid chain; its full sequence is tRNA-specific 2-thiouridylase MnmA (373 aa).

ATP is bound by residues 12 to 19 and Met38; that span reads GMSGGVDS. The tract at residues 98–100 is interaction with target base in tRNA; the sequence is NPD. Cys103 functions as the Nucleophile in the catalytic mechanism. Residues Cys103 and Cys200 are joined by a disulfide bond. Gly127 is a binding site for ATP. An interaction with tRNA region spans residues 150–152; that stretch reads KDQ. Cys200 (cysteine persulfide intermediate) is an active-site residue. The interaction with tRNA stretch occupies residues 312–313; it reads RY.

The protein belongs to the MnmA/TRMU family.

It localises to the cytoplasm. The catalysed reaction is S-sulfanyl-L-cysteinyl-[protein] + uridine(34) in tRNA + AH2 + ATP = 2-thiouridine(34) in tRNA + L-cysteinyl-[protein] + A + AMP + diphosphate + H(+). In terms of biological role, catalyzes the 2-thiolation of uridine at the wobble position (U34) of tRNA, leading to the formation of s(2)U34. This Streptococcus pyogenes serotype M12 (strain MGAS2096) protein is tRNA-specific 2-thiouridylase MnmA.